The following is a 429-amino-acid chain: Enolase (429 aa).

Gln-163 serves as a coordination point for (2R)-2-phosphoglycerate. Catalysis depends on Glu-205, which acts as the Proton donor. Mg(2+) contacts are provided by Asp-242, Glu-285, and Asp-312. Residues Lys-337, Arg-366, Ser-367, and Lys-388 each coordinate (2R)-2-phosphoglycerate. Lys-337 serves as the catalytic Proton acceptor.

The protein belongs to the enolase family. Mg(2+) is required as a cofactor.

Its subcellular location is the cytoplasm. It is found in the secreted. It localises to the cell surface. The catalysed reaction is (2R)-2-phosphoglycerate = phosphoenolpyruvate + H2O. It functions in the pathway carbohydrate degradation; glycolysis; pyruvate from D-glyceraldehyde 3-phosphate: step 4/5. Functionally, catalyzes the reversible conversion of 2-phosphoglycerate (2-PG) into phosphoenolpyruvate (PEP). It is essential for the degradation of carbohydrates via glycolysis. The sequence is that of Enolase from Methylorubrum extorquens (strain CM4 / NCIMB 13688) (Methylobacterium extorquens).